The sequence spans 245 residues: Uridylate kinase (245 aa).

20–23 (KVSG) serves as a coordination point for ATP. UMP is bound at residue glycine 62. Residues glycine 63 and arginine 67 each coordinate ATP. UMP-binding positions include aspartate 81 and 142-149 (IGSPFFTT). Positions 169, 170, 175, and 178 each coordinate ATP.

This sequence belongs to the UMP kinase family. Homohexamer.

The protein localises to the cytoplasm. It carries out the reaction UMP + ATP = UDP + ADP. Its pathway is pyrimidine metabolism; CTP biosynthesis via de novo pathway; UDP from UMP (UMPK route): step 1/1. With respect to regulation, inhibited by UTP. In terms of biological role, catalyzes the reversible phosphorylation of UMP to UDP. This chain is Uridylate kinase, found in Anaplasma marginale (strain St. Maries).